A 283-amino-acid polypeptide reads, in one-letter code: Bifunctional protein FolD (283 aa).

Residues 165-167 and Ser-190 contribute to the NADP(+) site; that span reads GAS.

The protein belongs to the tetrahydrofolate dehydrogenase/cyclohydrolase family. As to quaternary structure, homodimer.

The enzyme catalyses (6R)-5,10-methylene-5,6,7,8-tetrahydrofolate + NADP(+) = (6R)-5,10-methenyltetrahydrofolate + NADPH. It carries out the reaction (6R)-5,10-methenyltetrahydrofolate + H2O = (6R)-10-formyltetrahydrofolate + H(+). It participates in one-carbon metabolism; tetrahydrofolate interconversion. Its function is as follows. Catalyzes the oxidation of 5,10-methylenetetrahydrofolate to 5,10-methenyltetrahydrofolate and then the hydrolysis of 5,10-methenyltetrahydrofolate to 10-formyltetrahydrofolate. This Cupriavidus pinatubonensis (strain JMP 134 / LMG 1197) (Cupriavidus necator (strain JMP 134)) protein is Bifunctional protein FolD.